The chain runs to 155 residues: Ribosome maturation factor RimP (155 aa).

The protein belongs to the RimP family.

The protein resides in the cytoplasm. Required for maturation of 30S ribosomal subunits. This is Ribosome maturation factor RimP from Bacteroides fragilis (strain ATCC 25285 / DSM 2151 / CCUG 4856 / JCM 11019 / LMG 10263 / NCTC 9343 / Onslow / VPI 2553 / EN-2).